The sequence spans 35 residues: Photosystem II reaction center protein T (35 aa).

Residues 3–23 traverse the membrane as a helical segment; sequence SVAYILIFTLCIGTIFFAIAF.

Belongs to the PsbT family. PSII is composed of 1 copy each of membrane proteins PsbA, PsbB, PsbC, PsbD, PsbE, PsbF, PsbH, PsbI, PsbJ, PsbK, PsbL, PsbM, PsbT, PsbX, PsbY, PsbZ, Psb30/Ycf12, peripheral proteins PsbO, CyanoQ (PsbQ), PsbU, PsbV and a large number of cofactors. It forms dimeric complexes.

Its subcellular location is the cellular thylakoid membrane. Found at the monomer-monomer interface of the photosystem II (PS II) dimer, plays a role in assembly and dimerization of PSII. PSII is a light-driven water plastoquinone oxidoreductase, using light energy to abstract electrons from H(2)O, generating a proton gradient subsequently used for ATP formation. This Nostoc punctiforme (strain ATCC 29133 / PCC 73102) protein is Photosystem II reaction center protein T.